The following is a 152-amino-acid chain: Small ribosomal subunit protein bS6 (152 aa).

The tract at residues 96–152 (HEEGPSAMLQKRDRDDRGPREGGDRGPRREFGDRPPRRDGDFQRGPRPDRAPREDRA) is disordered.

The protein belongs to the bacterial ribosomal protein bS6 family.

Functionally, binds together with bS18 to 16S ribosomal RNA. The sequence is that of Small ribosomal subunit protein bS6 from Rhizobium etli (strain CIAT 652).